The primary structure comprises 234 residues: Leucyl/phenylalanyl-tRNA--protein transferase (234 aa).

It belongs to the L/F-transferase family.

The protein localises to the cytoplasm. It catalyses the reaction N-terminal L-lysyl-[protein] + L-leucyl-tRNA(Leu) = N-terminal L-leucyl-L-lysyl-[protein] + tRNA(Leu) + H(+). The enzyme catalyses N-terminal L-arginyl-[protein] + L-leucyl-tRNA(Leu) = N-terminal L-leucyl-L-arginyl-[protein] + tRNA(Leu) + H(+). It carries out the reaction L-phenylalanyl-tRNA(Phe) + an N-terminal L-alpha-aminoacyl-[protein] = an N-terminal L-phenylalanyl-L-alpha-aminoacyl-[protein] + tRNA(Phe). In terms of biological role, functions in the N-end rule pathway of protein degradation where it conjugates Leu, Phe and, less efficiently, Met from aminoacyl-tRNAs to the N-termini of proteins containing an N-terminal arginine or lysine. This chain is Leucyl/phenylalanyl-tRNA--protein transferase, found in Escherichia coli O7:K1 (strain IAI39 / ExPEC).